Reading from the N-terminus, the 118-residue chain is Putative membrane protein insertion efficiency factor (118 aa).

Residues 76–118 (WDPVPQRRPRRRDAAAADAAMSAPHACKGSPHAVVGDTNDGST) are disordered. Low complexity predominate over residues 91 to 101 (AADAAMSAPHA).

This sequence belongs to the UPF0161 family.

The protein resides in the cell membrane. Its function is as follows. Could be involved in insertion of integral membrane proteins into the membrane. The chain is Putative membrane protein insertion efficiency factor from Nocardia farcinica (strain IFM 10152).